Here is a 291-residue protein sequence, read N- to C-terminus: Bis(5'-nucleosyl)-tetraphosphatase, symmetrical (291 aa).

This sequence belongs to the Ap4A hydrolase family.

The enzyme catalyses P(1),P(4)-bis(5'-adenosyl) tetraphosphate + H2O = 2 ADP + 2 H(+). Functionally, hydrolyzes diadenosine 5',5'''-P1,P4-tetraphosphate to yield ADP. This chain is Bis(5'-nucleosyl)-tetraphosphatase, symmetrical, found in Coxiella burnetii (strain RSA 331 / Henzerling II).